We begin with the raw amino-acid sequence, 156 residues long: 6,7-dimethyl-8-ribityllumazine synthase (156 aa).

5-amino-6-(D-ribitylamino)uracil-binding positions include Phe-22, 57-59 (AVE), and 81-83 (TVI). A (2S)-2-hydroxy-3-oxobutyl phosphate-binding site is contributed by 86–87 (GT). Catalysis depends on His-89, which acts as the Proton donor. Phe-114 serves as a coordination point for 5-amino-6-(D-ribitylamino)uracil. A (2S)-2-hydroxy-3-oxobutyl phosphate-binding site is contributed by Arg-128.

The protein belongs to the DMRL synthase family. Forms an icosahedral capsid composed of 60 subunits, arranged as a dodecamer of pentamers.

It catalyses the reaction (2S)-2-hydroxy-3-oxobutyl phosphate + 5-amino-6-(D-ribitylamino)uracil = 6,7-dimethyl-8-(1-D-ribityl)lumazine + phosphate + 2 H2O + H(+). The protein operates within cofactor biosynthesis; riboflavin biosynthesis; riboflavin from 2-hydroxy-3-oxobutyl phosphate and 5-amino-6-(D-ribitylamino)uracil: step 1/2. Functionally, catalyzes the formation of 6,7-dimethyl-8-ribityllumazine by condensation of 5-amino-6-(D-ribitylamino)uracil with 3,4-dihydroxy-2-butanone 4-phosphate. This is the penultimate step in the biosynthesis of riboflavin. The protein is 6,7-dimethyl-8-ribityllumazine synthase of Vibrio campbellii (strain ATCC BAA-1116).